Here is a 7081-residue protein sequence, read N- to C-terminus: Leucine-rich repeat transmembrane protein CCDC168 (7081 aa).

A helical membrane pass occupies residues Trp-37–Ala-57. 2 LRR repeats span residues Pro-233–Gln-256 and Asn-420–Ala-445. The tract at residues Glu-717 to Cys-745 is disordered. Polar residues predominate over residues Asp-718–Thr-742. The LRR 3 repeat unit spans residues Ala-865–Gln-890. Positions Gln-943 to Glu-1009 are disordered. Over residues Val-958–Glu-970 the composition is skewed to polar residues. Basic and acidic residues predominate over residues Gln-981–Gly-999. Residues Leu-1050–Lys-1075 form an LRR 4 repeat. Composition is skewed to polar residues over residues Lys-1274–Ser-1286 and Leu-1295–Pro-1304. The tract at residues Lys-1274 to Pro-1304 is disordered. An LRR 5 repeat occupies Asn-1501–Thr-1527. Basic and acidic residues-rich tracts occupy residues Glu-1773 to Leu-1784 and Thr-1793 to Asp-1804. 4 disordered regions span residues Glu-1773–Asp-1804, Lys-1954–Ser-1973, Ser-2008–Ser-2031, and Thr-2083–Arg-2103. The span at Ala-1964 to Ser-1973 shows a compositional bias: polar residues. Residues Lys-2373–Glu-2397 form an LRR 6 repeat. The disordered stretch occupies residues Gly-2637–Ala-2680. Positions Ala-2668–Asp-2678 are enriched in polar residues. LRR repeat units follow at residues Ser-2727–Ala-2749, Ile-2832–Ser-2855, Ile-2862–Lys-2889, Leu-3433–Trp-3458, and Ile-3630–Ser-3653. Positions Ser-3730–Pro-3756 are disordered. One copy of the LRR 12 repeat lies at Met-3875–Cys-3898. Disordered regions lie at residues Glu-4119–Lys-4260, Gln-4293–Thr-4428, Gln-4729–Gln-4756, Ser-4794–Thr-4817, Met-4831–Asn-4859, Gly-4928–Cys-4955, Leu-4966–Gly-4985, and Gln-5191–His-5212. Basic and acidic residues-rich tracts occupy residues Ser-4121–Asp-4133, Lys-4147–Leu-4176, Glu-4192–Lys-4245, Gln-4329–Gly-4361, Glu-4375–Gly-4401, and Glu-4415–Gln-4426. Positions Ser-4731–Thr-4743 are enriched in polar residues. Basic and acidic residues-rich tracts occupy residues Leu-4746–Gln-4756 and Lys-4798–Thr-4817. Residues Lys-5203–His-5212 are compositionally biased toward polar residues. The stretch at Leu-5311 to Arg-5336 is one LRR 13 repeat. The tract at residues Leu-5467 to Arg-5496 is disordered. Basic and acidic residues predominate over residues Asp-5469 to Arg-5496. The stretch at Leu-5522–Ala-5545 is one LRR 14 repeat. Disordered stretches follow at residues Leu-5564–Pro-5583 and Gln-5763–Arg-5792. Over residues Lys-5779–Arg-5792 the composition is skewed to basic and acidic residues. LRR repeat units follow at residues Lys-5901 to Pro-5924, Pro-6259 to Ser-6282, His-6419 to Met-6442, His-6552 to Met-6575, and Gln-6613 to Lys-6637. Disordered regions lie at residues Cys-6859 to Trp-6878 and Ala-6916 to Leu-6950. Positions Lys-6860 to Ser-6871 are enriched in basic residues. Residues His-6937–Leu-6950 are compositionally biased toward basic and acidic residues. The stretch at Asn-7012–Ile-7036 is one LRR 20 repeat.

The protein resides in the membrane. The protein is Leucine-rich repeat transmembrane protein CCDC168 of Homo sapiens (Human).